A 132-amino-acid polypeptide reads, in one-letter code: Transcription antitermination protein NusB (132 aa).

This sequence belongs to the NusB family.

Its function is as follows. Involved in transcription antitermination. Required for transcription of ribosomal RNA (rRNA) genes. Binds specifically to the boxA antiterminator sequence of the ribosomal RNA (rrn) operons. This is Transcription antitermination protein NusB from Campylobacter jejuni subsp. doylei (strain ATCC BAA-1458 / RM4099 / 269.97).